The primary structure comprises 233 residues: Adenosine 5'-phosphosulfate reductase 1 (233 aa).

Cys120, Cys121, Cys203, and Cys206 together coordinate [4Fe-4S] cluster. Residue Cys229 is the Nucleophile; cysteine thiosulfonate intermediate of the active site.

The protein belongs to the PAPS reductase family. CysH subfamily. Requires [4Fe-4S] cluster as cofactor.

The protein resides in the cytoplasm. It carries out the reaction [thioredoxin]-disulfide + sulfite + AMP + 2 H(+) = adenosine 5'-phosphosulfate + [thioredoxin]-dithiol. Its pathway is sulfur metabolism; hydrogen sulfide biosynthesis; sulfite from sulfate. Catalyzes the formation of sulfite from adenosine 5'-phosphosulfate (APS) using thioredoxin as an electron donor. The chain is Adenosine 5'-phosphosulfate reductase 1 (cysH) from Bacillus subtilis (strain 168).